We begin with the raw amino-acid sequence, 366 residues long: Phospho-N-acetylmuramoyl-pentapeptide-transferase (366 aa).

10 helical membrane-spanning segments follow: residues 27-47 (AALF…ISSL), 71-91 (TPTM…LLWA), 93-113 (LSSI…AIGF), 134-154 (LGIE…AAQS), 174-194 (LMLN…VGAG), 205-225 (GLAI…AYLA), 245-265 (LAVI…FNAP), 268-288 (AIFM…TVAV), 297-317 (VIIG…VFWF), and 343-363 (QVVI…LSTL).

It belongs to the glycosyltransferase 4 family. MraY subfamily. It depends on Mg(2+) as a cofactor.

It is found in the cell inner membrane. It catalyses the reaction UDP-N-acetyl-alpha-D-muramoyl-L-alanyl-gamma-D-glutamyl-meso-2,6-diaminopimeloyl-D-alanyl-D-alanine + di-trans,octa-cis-undecaprenyl phosphate = di-trans,octa-cis-undecaprenyl diphospho-N-acetyl-alpha-D-muramoyl-L-alanyl-D-glutamyl-meso-2,6-diaminopimeloyl-D-alanyl-D-alanine + UMP. It functions in the pathway cell wall biogenesis; peptidoglycan biosynthesis. Catalyzes the initial step of the lipid cycle reactions in the biosynthesis of the cell wall peptidoglycan: transfers peptidoglycan precursor phospho-MurNAc-pentapeptide from UDP-MurNAc-pentapeptide onto the lipid carrier undecaprenyl phosphate, yielding undecaprenyl-pyrophosphoryl-MurNAc-pentapeptide, known as lipid I. The sequence is that of Phospho-N-acetylmuramoyl-pentapeptide-transferase from Sinorhizobium fredii (strain NBRC 101917 / NGR234).